The following is a 773-amino-acid chain: MSRALPGFLFAGLSVAVVLPAQALVAHEQKAAGAEIRRTGFGVPHIVADDERGLGYGIGYAYAQDNLCLLANEVVTVNGERSRYFGPDKATLEQRNNMASDLLFKWLNTPQALADFWKAQPAEIRHLMQGYVAGYNRSLAEQTTQGLPQPCAAEWVRPISTDDLVRLTRRLLVEGGVGQFTEAFAGAKPPSTQKPLQVDSQQVQALQLAAARNERFALERGSNAVAVGRDLSANGRGMLLANPHFPWGGGMRFYQMHLTIPGKLDVMGAALPGLPLINIGFNQHLAWSHTVDTSKHFTLHRLQLDPKDSTRYLLDGKSVAMGKQQVSVEVKQADGTLKAVPRIIYSSKFGPVVQWPGKLDWDDKFAFSLRDANLKNDRVLQQWYAMDQADSLKAFQDSVHRIQGIPWVNTLAVDAKGQALYMNISVVPNVDAVKLARCSDPRIGTELIVLDGSRSECNWDVSPEAAQAGIYPSSRQPQLLRTDFVQHSNDSAWMVNPAAPLKDFSPLISQDGQPLGQRARFALDRLSSLEKTGKVSVENLQAMVMDNEVYHAGQVLPDLLKFCASELGDDAARLAPLCTALKAWDGRADLNSGIGFVYFQRIVTSMQAVASRWRVVFDPQNPVHTPSGLAIEYPEVATALRAAMLAAVDEVAKAGLSADTRWGDIQVSSISGKPIPIHGGPAGLGIYNAMQTVAGRDGKREVVSGTSYLQVVTFDEHGPKAQGLLAFSESSNPQSAHSRDQTEAFSKKHWSVLPFTEQQIKADPAYQVQVVKE.

A signal peptide spans 1-23; it reads MSRALPGFLFAGLSVAVVLPAQA. Positions 200 to 221 are cleaved as a propeptide — spacer peptide; that stretch reads SQQVQALQLAAARNERFALERG. Catalysis depends on S222, which acts as the Nucleophile.

The protein belongs to the peptidase S45 family. In terms of assembly, heterodimer of an alpha subunit and a beta subunit processed from the same precursor.

Its subcellular location is the periplasm. The enzyme catalyses an N-acyl-L-homoserine lactone + H2O = L-homoserine lactone + a carboxylate. Functionally, catalyzes the deacylation of acyl-homoserine lactone (AHL or acyl-HSL), releasing homoserine lactone (HSL) and the corresponding fatty acid. Possesses a specificity for the degradation of long-chain acyl-HSLs (side chains of 11 to 14 carbons in length). The polypeptide is Acyl-homoserine lactone acylase PvdQ (pvdQ) (Pseudomonas syringae pv. tomato (strain ATCC BAA-871 / DC3000)).